The following is a 399-amino-acid chain: Sphingosine-1-phosphate phosphatase 2 (399 aa).

Transmembrane regions (helical) follow at residues 88 to 108 (YLFQ…FLPF), 121 to 141 (LIII…VLKW), 160 to 180 (YGMP…LLIS), and 185 to 205 (YQYP…LVCL). The segment at 136–144 (KDVLKWPRP) is phosphatase sequence motif I. Residues 163-166 (PSTH) are phosphatase sequence motif II. The active-site Proton donor is the His166. The tract at residues 206–217 (SRLYTGMHTVLD) is phosphatase sequence motif III. His213 (nucleophile) is an active-site residue. Helical transmembrane passes span 219 to 239 (LGGV…WTFI), 247 to 267 (PLFP…YPVS), 280 to 300 (ILAA…FQLV), 318 to 338 (TYML…ILLV), and 371 to 391 (VPYK…FVPM).

This sequence belongs to the type 2 lipid phosphate phosphatase family. As to expression, expressed strongly in kidney and heart, followed by brain, colon, small intestine and lung. Not detected in skeletal muscle, thymus, spleen, liver, placenta, and peripheral blood leukocytes.

The protein localises to the endoplasmic reticulum membrane. It carries out the reaction sphinganine 1-phosphate + H2O = sphinganine + phosphate. The enzyme catalyses sphing-4-enine 1-phosphate + H2O = sphing-4-enine + phosphate. The catalysed reaction is (4R)-hydroxysphinganine 1-phosphate + H2O = (4R)-hydroxysphinganine + phosphate. Its function is as follows. Has specific phosphohydrolase activity towards sphingoid base 1-phosphates. Has high phosphohydrolase activity against dihydrosphingosine-1-phosphate and sphingosine-1-phosphate (S1P) in vitro. Sphingosine-1-phosphate phosphatase activity is needed for efficient recycling of sphingosine into the sphingolipid synthesis pathway. May play a role in attenuating intracellular sphingosine 1-phosphate (S1P) signaling. May play a role in pro-inflammatory signaling. Plays a role in the regulation of pancreatic islet beta-cell endoplasmic reticulum stress and proliferation. The polypeptide is Sphingosine-1-phosphate phosphatase 2 (Homo sapiens (Human)).